The primary structure comprises 512 residues: Maturase K (512 aa).

Belongs to the intron maturase 2 family. MatK subfamily.

Its subcellular location is the plastid. It is found in the chloroplast. Its function is as follows. Usually encoded in the trnK tRNA gene intron. Probably assists in splicing its own and other chloroplast group II introns. The protein is Maturase K of Filarum manserichense.